We begin with the raw amino-acid sequence, 264 residues long: Thiazole synthase (264 aa).

Lys101 (schiff-base intermediate with DXP) is an active-site residue. 1-deoxy-D-xylulose 5-phosphate-binding positions include Gly162, 189-190 (AG), and 211-212 (NT). A disordered region spans residues 245 to 264 (KRQTASPSTPTLGQPFWHNQ).

This sequence belongs to the ThiG family. In terms of assembly, homotetramer. Forms heterodimers with either ThiH or ThiS.

Its subcellular location is the cytoplasm. The enzyme catalyses [ThiS sulfur-carrier protein]-C-terminal-Gly-aminoethanethioate + 2-iminoacetate + 1-deoxy-D-xylulose 5-phosphate = [ThiS sulfur-carrier protein]-C-terminal Gly-Gly + 2-[(2R,5Z)-2-carboxy-4-methylthiazol-5(2H)-ylidene]ethyl phosphate + 2 H2O + H(+). The protein operates within cofactor biosynthesis; thiamine diphosphate biosynthesis. Catalyzes the rearrangement of 1-deoxy-D-xylulose 5-phosphate (DXP) to produce the thiazole phosphate moiety of thiamine. Sulfur is provided by the thiocarboxylate moiety of the carrier protein ThiS. In vitro, sulfur can be provided by H(2)S. The chain is Thiazole synthase from Cellvibrio japonicus (strain Ueda107) (Pseudomonas fluorescens subsp. cellulosa).